We begin with the raw amino-acid sequence, 471 residues long: Thymidine phosphorylase (471 aa).

Residues 1-10 (MAAPGTPPPS) are compositionally biased toward pro residues. Residues 1 to 21 (MAAPGTPPPSASGGGGGEPRQ) form a disordered region. Position 6 is a phosphothreonine (Thr-6). 4 residues coordinate substrate: His-102, Arg-188, Ser-203, and Lys-207.

Belongs to the thymidine/pyrimidine-nucleoside phosphorylase family. Homodimer.

The catalysed reaction is thymidine + phosphate = 2-deoxy-alpha-D-ribose 1-phosphate + thymine. Its pathway is pyrimidine metabolism; dTMP biosynthesis via salvage pathway; dTMP from thymine: step 1/2. In terms of biological role, catalyzes the reversible phosphorolysis of thymidine. The produced molecules are then utilized as carbon and energy sources or in the rescue of pyrimidine bases for nucleotide synthesis. This Mus musculus (Mouse) protein is Thymidine phosphorylase (Tymp).